The sequence spans 61 residues: UPF0181 protein MS1074 (61 aa).

Belongs to the UPF0181 family.

This is UPF0181 protein MS1074 from Mannheimia succiniciproducens (strain KCTC 0769BP / MBEL55E).